Reading from the N-terminus, the 446-residue chain is MNVKKFPEGFLWGVATASYQIEGSPLADGAGMSIWHTFSHTPGNVKNGDTGDVACDHYNRWKEDIEIIEKLGVKAYRFSISWPRILPEGTGRVNQKGLDFYNRIIDTLLEKGITPFVTIYHWDLPFALQLKGGWANREIADWFAEYSRVLFENFGDRVKNWITLNEPWVVAIVGHLYGVHAPGMRDIYVAFRAVHNLLRAHARAVKVFRETVKDGKIGIVFNNGYFEPASEKEEDIRAVRFMHQFNNYPLFLNPIYRGDYPELVLEFAREYLPENYKDDMSEIQEKIDFVGLNYYSGHLVKFDPDAPAKVSFVERDLPKTAMGWEIVPEGIYWILKKVKEEYNPPEVYITENGAAFDDVVSEDGRVHDQNRIDYLKAHIGQAWKAIQEGVPLKGYFVWSLLDNFEWAEGYSKRFGIVYVDYSTQKRIVKDSGYWYSNVVKNNGLED.

Residue E166 is the Proton donor of the active site. E351 acts as the Nucleophile in catalysis.

The protein belongs to the glycosyl hydrolase 1 family.

It carries out the reaction Hydrolysis of terminal, non-reducing beta-D-glucosyl residues with release of beta-D-glucose.. Its pathway is glycan metabolism; cellulose degradation. The sequence is that of Beta-glucosidase A (bglA) from Thermotoga maritima (strain ATCC 43589 / DSM 3109 / JCM 10099 / NBRC 100826 / MSB8).